The chain runs to 2068 residues: Lipoxygenase homology domain-containing protein 1 (2068 aa).

PLAT domains are found at residues Lys-43–Leu-160, Asn-172–Leu-287, Ile-296–Tyr-412, Tyr-425–Thr-540, Ala-553–Leu-673, Phe-684–Tyr-803, Val-814–Leu-934, Thr-970–Phe-1088, Val-1101–Val-1226, Val-1255–Tyr-1373, Ile-1422–Asp-1540, Val-1553–Cys-1668, Thr-1680–Ala-1798, Thr-1811–Val-1932, and Val-1949–Phe-2065.

In terms of tissue distribution, expressed in the inner ear, specifically in hair cells. Higher expression is detected in the cochlea.

Its subcellular location is the cell projection. The protein resides in the stereocilium. Required for normal function of hair cells in the inner ear. In Mus musculus (Mouse), this protein is Lipoxygenase homology domain-containing protein 1 (Loxhd1).